Reading from the N-terminus, the 156-residue chain is Endogenous retrovirus group K member 104 Pro protein (156 aa).

Residues 21–96 enclose the Peptidase A2 domain; sequence FEGLVDTEAD…IPLNLWGQDL (76 aa). The active site involves Asp-26. Residues 111–156 enclose the G-patch domain; that stretch reads YSPTSQKIMTKMGYIPGKGLGKNEDGIKVPVEAKINQKREGIGYPF.

This sequence belongs to the peptidase A2 family. HERV class-II K(HML-2) subfamily. Active as a homodimer. Autoproteolytically processed at the N-terminus. Expected C-terminal autoprocessing not detected. The sequence shown is that of the processed Pro protein.

It catalyses the reaction Processing at the authentic HIV-1 PR recognition site and release of the mature p17 matrix and the p24 capsid protein, as a result of the cleavage of the -SQNY-|-PIVQ- cleavage site.. Its function is as follows. Retroviral proteases have roles in the processing of the primary translation products and the maturation of the viral particle. Endogenous Pro proteins may have kept, lost or modified their original function during evolution. The sequence is that of Endogenous retrovirus group K member 104 Pro protein (HERV-K104) from Homo sapiens (Human).